Consider the following 455-residue polypeptide: Argininosuccinate lyase (455 aa).

This sequence belongs to the lyase 1 family. Argininosuccinate lyase subfamily.

The protein localises to the cytoplasm. It catalyses the reaction 2-(N(omega)-L-arginino)succinate = fumarate + L-arginine. The protein operates within amino-acid biosynthesis; L-arginine biosynthesis; L-arginine from L-ornithine and carbamoyl phosphate: step 3/3. The protein is Argininosuccinate lyase of Shewanella sp. (strain MR-4).